A 245-amino-acid chain; its full sequence is Probable transcriptional regulatory protein SUN_1622 (245 aa).

It belongs to the TACO1 family.

Its subcellular location is the cytoplasm. The sequence is that of Probable transcriptional regulatory protein SUN_1622 from Sulfurovum sp. (strain NBC37-1).